The chain runs to 408 residues: Putative ankyrin repeat protein L483 (408 aa).

ANK repeat units lie at residues 78–107, 108–137, 139–167, 168–197, 198–227, 229–257, 259–287, 288–317, 318–347, 349–377, and 378–407; these read SLNKCLIKSCKKNKLNIIKYLVSLGADIKA, GDDCAVQLASQNGHLEVIEYLVAQGANIRA, NDYAVIWASRNGYLDIVKYLVSQGADIRA, NNDYAVRWASRNGHLKVVKYLVSLGANIRT, ENDYAIKYASENGYLRIVEYLVSQGADIRA, NDYAVGLASSNGHFEVVEYLVSQGANIRV, NDYAVRLASSNGHLEVVKYLVSLRANIRA, RCDFAIKWSSSNGHLEVVKYLVSQGADIRS, QNDYAVRYASTNGHLEVVKYLVGQGADIRT, DDYAVRWASRGGCLEVVKYLVDQGANIRA, and KDDYAVKWASEKGHLEIVKFLISQGAVLTK.

This is Putative ankyrin repeat protein L483 from Acanthamoeba polyphaga (Amoeba).